A 325-amino-acid polypeptide reads, in one-letter code: Inner membrane protein YrbG (325 aa).

Topologically, residues 1–5 (MLLAT) are periplasmic. A helical transmembrane segment spans residues 6–26 (ALLIVGLLLVVYSADRLVFAA). Topologically, residues 27 to 37 (SILCRTFGIPP) are cytoplasmic. The chain crosses the membrane as a helical span at residues 38–58 (LIIGMTVVSIGTSLPEVIVSL). Residues 59–67 (AASLHEQRD) lie on the Periplasmic side of the membrane. Residues 68–88 (LAVGTALGSNIINILLILGLA) traverse the membrane as a helical segment. The Cytoplasmic segment spans residues 89–104 (ALVRPFTVHSDVLRRE). Residues 105-125 (LPLMLLVSVVAGSVLYDGQLS) form a helical membrane-spanning segment. A topological domain (periplasmic) is located at residue R126. The helical transmembrane segment at 127-147 (SDGIFLLFLAVLWLLFIVKLA) threads the bilayer. Over 148-169 (RQAERQGTDSLTREQLAELPRD) the chain is Cytoplasmic. Residues 170–190 (GGLPVAFLWLGIALIIMPVAT) traverse the membrane as a helical segment. Residues 191–198 (RMVVDNAT) lie on the Periplasmic side of the membrane. A helical transmembrane segment spans residues 199–219 (VLANYFAISELTMGLTAIAIG). Topologically, residues 220 to 243 (TSLPELATAIAGVRKGENDIAVGN) are cytoplasmic. A helical transmembrane segment spans residues 244–264 (IIGANIFNIVIVLGLPALITP). Residues 265–269 (GEIDP) lie on the Periplasmic side of the membrane. A helical transmembrane segment spans residues 270–290 (LAYSRDYSVMLLVSIIFALLC). Topologically, residues 291 to 302 (WRRSPQPGRGVG) are cytoplasmic. Residues 303–323 (VLLTGGFIVWLAMLYWLSPIL) traverse the membrane as a helical segment. The Periplasmic segment spans residues 324–325 (VE).

It belongs to the Ca(2+):cation antiporter (CaCA) (TC 2.A.19) family.

Its subcellular location is the cell inner membrane. In Escherichia coli (strain K12), this protein is Inner membrane protein YrbG (yrbG).